A 249-amino-acid chain; its full sequence is MTAERRPLIAGNWKMNGLRAAKSELRTVAAGLAGLSAETMICPPFTLIGAFAADVAGTQLMIGGQDCHPAESGAHTGDISAEMLRDAGAVAVILGHSERRIDHQEGDAIVKAKVKAAWRAGLLPVVCVGETLVERDAGEAAAVVTRQVRQSVPEGATAVSLVIAYEPIWAIGTGRTPTTDDVAEVHGAIRHILAERFGAEANGIRILYGGSVKPDNAAALLATANVDGALVGGASLKAADFLAIARAVG.

12–14 (NWK) lines the substrate pocket. His96 acts as the Electrophile in catalysis. Catalysis depends on Glu166, which acts as the Proton acceptor. Substrate-binding positions include Gly172, Ser211, and 232–233 (GG).

The protein belongs to the triosephosphate isomerase family. In terms of assembly, homodimer.

It localises to the cytoplasm. It carries out the reaction D-glyceraldehyde 3-phosphate = dihydroxyacetone phosphate. The protein operates within carbohydrate biosynthesis; gluconeogenesis. It functions in the pathway carbohydrate degradation; glycolysis; D-glyceraldehyde 3-phosphate from glycerone phosphate: step 1/1. In terms of biological role, involved in the gluconeogenesis. Catalyzes stereospecifically the conversion of dihydroxyacetone phosphate (DHAP) to D-glyceraldehyde-3-phosphate (G3P). This is Triosephosphate isomerase from Xanthobacter flavus.